A 358-amino-acid polypeptide reads, in one-letter code: MSFNSFGRVLRFTTWGESHGPALGAVVDGCPPRLSLSEADIQPFLDKRRPGQSRHTTQRQEPDQVRILSGVFEGKTTGTPISLMIENVDQRSKDYGEIAQAWRPGHADYAYDAKYGIRDYRGGGRSSARETAARVAAGAVARLVIPEVQIHAWVAEIGGDAIDPANFDLEEIDRNPFFCPDPAAAQRWEALMDSARKAGSSLGAVIECAASGVPAGWGAPVYAKLDSDLAAAMMGINAVKGVEIGAGFGVARLRGEENADPMRPASDGSNRPDFLSNNAGGIAGGISTGQPVVVRVAFKPTSSILTPVPTVNKAGEATDIVTRGRHDPCVGIRGAPVVEAMMALTLADHKLLHRAQCG.

The tract at residues 39-61 (ADIQPFLDKRRPGQSRHTTQRQE) is disordered. Residues Arg-48 and Arg-54 each contribute to the NADP(+) site. Residues 125–127 (RSS), 237–238 (NA), Gly-284, 299–303 (KPTSS), and Arg-325 contribute to the FMN site.

This sequence belongs to the chorismate synthase family. In terms of assembly, homotetramer. FMNH2 is required as a cofactor.

It carries out the reaction 5-O-(1-carboxyvinyl)-3-phosphoshikimate = chorismate + phosphate. It participates in metabolic intermediate biosynthesis; chorismate biosynthesis; chorismate from D-erythrose 4-phosphate and phosphoenolpyruvate: step 7/7. Functionally, catalyzes the anti-1,4-elimination of the C-3 phosphate and the C-6 proR hydrogen from 5-enolpyruvylshikimate-3-phosphate (EPSP) to yield chorismate, which is the branch point compound that serves as the starting substrate for the three terminal pathways of aromatic amino acid biosynthesis. This reaction introduces a second double bond into the aromatic ring system. The polypeptide is Chorismate synthase (Sphingopyxis alaskensis (strain DSM 13593 / LMG 18877 / RB2256) (Sphingomonas alaskensis)).